The sequence spans 300 residues: MGSTRKGMLNVLIAAVLWGSSGVCAQYIMEQSRMSSQFLTMIRLLFAGLILVTFSFMHGDKIFSILKNRKDALSLLIFSVVGALTVQLTFLLTIEKSNAATATVLQFLSPTIIVAWFALARRTRPGILVLTAILTSLIGTFLLVTHGNPTSLSISSAALFWGIASAFAAAFYTTWPSRLIAQYGTLPVVGWSMSFGGLILLPFYAKEGTHFAVSGSLILAFFYLVVIGTSLTFSLYLKGAQLIGGPKASILSCAEPLSSALLSLLLLGISFTLPDWLGTLLILSSVILISLDSRRRARAA.

The Periplasmic segment spans residues 1–7; that stretch reads MGSTRKG. Residues 8-28 form a helical membrane-spanning segment; the sequence is MLNVLIAAVLWGSSGVCAQYI. Residues 16–145 enclose the EamA 1 domain; the sequence is VLWGSSGVCA…SLIGTFLLVT (130 aa). The Cytoplasmic portion of the chain corresponds to 29–45; the sequence is MEQSRMSSQFLTMIRLL. The chain crosses the membrane as a helical span at residues 46–66; that stretch reads FAGLILVTFSFMHGDKIFSIL. At 67-71 the chain is on the periplasmic side; it reads KNRKD. The chain crosses the membrane as a helical span at residues 72-92; the sequence is ALSLLIFSVVGALTVQLTFLL. Topologically, residues 93–99 are cytoplasmic; the sequence is TIEKSNA. A helical membrane pass occupies residues 100–120; that stretch reads ATATVLQFLSPTIIVAWFALA. Over 121 to 124 the chain is Periplasmic; it reads RRTR. A helical transmembrane segment spans residues 125–145; the sequence is PGILVLTAILTSLIGTFLLVT. The Cytoplasmic portion of the chain corresponds to 146-151; it reads HGNPTS. Residues 152 to 172 traverse the membrane as a helical segment; the sequence is LSISSAALFWGIASAFAAAFY. The region spanning 167-291 is the EamA 2 domain; sequence FAAAFYTTWP…ILSSVILISL (125 aa). Residues 173–184 are Periplasmic-facing; that stretch reads TTWPSRLIAQYG. Residues 185-205 traverse the membrane as a helical segment; sequence TLPVVGWSMSFGGLILLPFYA. Residues 206-216 are Cytoplasmic-facing; that stretch reads KEGTHFAVSGS. The chain crosses the membrane as a helical span at residues 217-237; sequence LILAFFYLVVIGTSLTFSLYL. Residues 238–263 lie on the Periplasmic side of the membrane; it reads KGAQLIGGPKASILSCAEPLSSALLS. The chain crosses the membrane as a helical span at residues 264–284; it reads LLLLGISFTLPDWLGTLLILS. Topologically, residues 285–300 are cytoplasmic; it reads SVILISLDSRRRARAA.

The protein belongs to the EamA transporter family.

It is found in the cell inner membrane. This is an uncharacterized protein from Salmonella typhimurium (strain LT2 / SGSC1412 / ATCC 700720).